The following is a 134-amino-acid chain: Large ribosomal subunit protein uL14 (134 aa).

It belongs to the universal ribosomal protein uL14 family. As to quaternary structure, part of the 50S ribosomal subunit. Forms a cluster with proteins L3 and L19. In the 70S ribosome, L14 and L19 interact and together make contacts with the 16S rRNA in bridges B5 and B8.

Its function is as follows. Binds to 23S rRNA. Forms part of two intersubunit bridges in the 70S ribosome. This Deinococcus geothermalis (strain DSM 11300 / CIP 105573 / AG-3a) protein is Large ribosomal subunit protein uL14.